Reading from the N-terminus, the 138-residue chain is Basic phospholipase A2 Mtx-b (138 aa).

An N-terminal signal peptide occupies residues 1–16; the sequence is MRALWIVAVLLVGVEG. Disulfide bonds link Cys42/Cys131, Cys44/Cys60, Cys59/Cys111, Cys65/Cys138, Cys66/Cys104, Cys73/Cys97, and Cys91/Cys102. 3 residues coordinate Ca(2+): Tyr43, Gly45, and Gly47. The active site involves His63. Residue Asp64 coordinates Ca(2+). Asp105 is a catalytic residue.

As to quaternary structure, heterodimer of an acidic subunit and a basic chain. The acidic subunit is non-toxic, without enzymatic activity and comprises 3 peptides that are cross-linked by 7 disulfide bridges. The basic subunit is toxic, has phospholipase A2 activity and is composed of a single chain. Requires Ca(2+) as cofactor. In terms of tissue distribution, expressed by the venom gland.

The protein localises to the secreted. The enzyme catalyses a 1,2-diacyl-sn-glycero-3-phosphocholine + H2O = a 1-acyl-sn-glycero-3-phosphocholine + a fatty acid + H(+). In terms of biological role, snake venom phospholipase A2 (PLA2) that inhibits neuromuscular transmission by blocking acetylcholine release from the nerve termini. PLA2 catalyzes the calcium-dependent hydrolysis of the 2-acyl groups in 3-sn-phosphoglycerides. The chain is Basic phospholipase A2 Mtx-b from Crotalus scutulatus scutulatus (Mojave rattlesnake).